The following is a 146-amino-acid chain: Large ribosomal subunit protein uL15 (146 aa).

Positions 1–53 are disordered; the sequence is MILSNLKPVPGARHSKKRLGRGPGSGTGKTSGKGHKGQKARSGGGVRPGFEGG. Composition is skewed to gly residues over residues 21-31 and 42-52; these read RGPGSGTGKTS and SGGGVRPGFEG.

It belongs to the universal ribosomal protein uL15 family. As to quaternary structure, part of the 50S ribosomal subunit.

Binds to the 23S rRNA. The polypeptide is Large ribosomal subunit protein uL15 (Acholeplasma laidlawii (strain PG-8A)).